A 147-amino-acid chain; its full sequence is Hemoglobin subunit beta (147 aa).

V2 bears the N-acetylvaline mark. The region spanning N3–H147 is the Globin domain. At S45 the chain carries Phosphoserine. Residue K60 is modified to N6-acetyllysine. H64 lines the heme b pocket. K83 is subject to N6-acetyllysine. H93 lines the heme b pocket. C94 is subject to S-nitrosocysteine.

Belongs to the globin family. In terms of assembly, heterotetramer of two alpha chains and two beta chains. Red blood cells.

Its function is as follows. Involved in oxygen transport from the lung to the various peripheral tissues. In Vicugna pacos (Alpaca), this protein is Hemoglobin subunit beta (HBB).